The following is a 146-amino-acid chain: Leghemoglobin (146 aa).

Residues 3–146 (AFTEKQEALV…FAAGIKKAYA (144 aa)) form the Globin domain. Nitrated tyrosine occurs at positions 26 and 31. Serine 46 is a heme b binding site. Phosphoserine is present on serine 46. Histidine 62 contacts O2. Heme b contacts are provided by histidine 93 and lysine 96. Position 134 is a nitrated tyrosine (tyrosine 134).

It belongs to the plant globin family. Monomer. Nitrated mainly at Tyr-31 and, to a lower extent, at Tyr-26 and Tyr-134, in effective nodules and particularly in hypoxic conditions; this mechanism may play a protective role in the symbiosis by buffering toxic peroxynitrite NO(2)(-). Nitration level decrease during nodule senescence. Post-translationally, phosphorylation at Ser-46 disrupts the molecular environment of its porphyrin ring oxygen binding pocket, thus leading to a reduced oxygen consumption and to the delivery of oxygen O(2) to symbiosomes. As to expression, root nodules.

The protein localises to the cytoplasm. It is found in the cytosol. It localises to the nucleus. In terms of biological role, leghemoglobin that reversibly binds oxygen O(2) through a pentacoordinated heme iron. In root nodules, facilitates the diffusion of oxygen to the bacteroids while preventing the bacterial nitrogenase from being inactivated by buffering dioxygen, nitric oxide and carbon monoxide, and promoting the formation of reactive oxygen species (ROS, e.g. H(2)O(2)). This role is essential for symbiotic nitrogen fixation (SNF). The chain is Leghemoglobin from Phaseolus vulgaris (Kidney bean).